A 133-amino-acid chain; its full sequence is ATP synthase epsilon chain, chloroplastic (133 aa).

Belongs to the ATPase epsilon chain family. As to quaternary structure, F-type ATPases have 2 components, CF(1) - the catalytic core - and CF(0) - the membrane proton channel. CF(1) has five subunits: alpha(3), beta(3), gamma(1), delta(1), epsilon(1). CF(0) has three main subunits: a, b and c.

It localises to the plastid. The protein resides in the chloroplast thylakoid membrane. Its function is as follows. Produces ATP from ADP in the presence of a proton gradient across the membrane. The sequence is that of ATP synthase epsilon chain, chloroplastic from Psilotum nudum (Whisk fern).